Here is a 262-residue protein sequence, read N- to C-terminus: ATP synthase subunit a (262 aa).

Transmembrane regions (helical) follow at residues 24–44 (AVHL…LFVF), 84–104 (VIAP…AIDL), 129–149 (DISA…FYTV), 194–214 (LFGN…MYMA), and 228–248 (LVWA…FMML).

This sequence belongs to the ATPase A chain family. As to quaternary structure, F-type ATPases have 2 components, CF(1) - the catalytic core - and CF(0) - the membrane proton channel. CF(1) has five subunits: alpha(3), beta(3), gamma(1), delta(1), epsilon(1). CF(0) has three main subunits: a(1), b(2) and c(9-12). The alpha and beta chains form an alternating ring which encloses part of the gamma chain. CF(1) is attached to CF(0) by a central stalk formed by the gamma and epsilon chains, while a peripheral stalk is formed by the delta and b chains.

The protein resides in the cell inner membrane. Key component of the proton channel; it plays a direct role in the translocation of protons across the membrane. The chain is ATP synthase subunit a from Actinobacillus pleuropneumoniae serotype 3 (strain JL03).